The sequence spans 722 residues: Zinc finger protein 219 (722 aa).

A disordered region spans residues 1–21; sequence MEGSRPRAPSGHLAPSPPAFD. Serine 16 bears the Phosphoserine mark. 2 consecutive C2H2-type zinc fingers follow at residues 57 to 79 and 85 to 107; these read FPCP…LRAH and FQCP…LRTH. The tract at residues 137–160 is disordered; it reads ARSSGGMQATPATEGLARPQAPSS. 2 consecutive C2H2-type zinc fingers follow at residues 163 to 186 and 189 to 212; these read FRCP…HILH and WKCG…LTAH. The interval 215–275 is disordered; it reads PERPLAATSA…EEPPAPPEFR (61 aa). Composition is skewed to pro residues over residues 225–247 and 259–272; these read APPP…PQPE and TPAP…PAPP. 2 consecutive C2H2-type zinc fingers follow at residues 274–296 and 302–324; these read FRCQ…MRKH and HACP…MKVH. The disordered stretch occupies residues 384 to 495; sequence LRAGEGRPNG…GTRPEGGRGA (112 aa). Residues 390–404 are compositionally biased toward gly residues; it reads RPNGEGAEPGPGRSF. Residues 425–438 are compositionally biased toward acidic residues; that stretch reads EPEEEEEVVEAEEE. Positions 463-477 are enriched in low complexity; the sequence is SASAAGAQARSTATQ. 2 consecutive C2H2-type zinc fingers follow at residues 498-520 and 526-548; these read KDCP…LRVH and YKCP…LQRH. Disordered regions lie at residues 542-648 and 668-722; these read KYHL…LHRC and HHSR…GQER. Positions 558 to 568 are enriched in pro residues; it reads PGPPPEPPPPS. The segment covering 634 to 643 has biased composition (gly residues); sequence GPGGEAGPGG. The C2H2-type 9 zinc finger occupies 646–668; the sequence is HRCLFCPFATGAPELMALHLQVH. Residues 668 to 677 are compositionally biased toward basic residues; the sequence is HHSRRARGRR. Serine 692 is modified (phosphoserine). Threonine 695 is subject to Phosphothreonine. At serine 698 the chain carries Phosphoserine.

It belongs to the krueppel C2H2-type zinc-finger protein family. Interacts with SOX9 (via C-terminus). As to expression, ubiquitous.

The protein localises to the nucleus. Transcriptional regulator. Recognizes and binds 2 copies of the core DNA sequence motif 5'-GGGGG-3'. Binds to the HMGN1 promoter and may repress HMGN1 expression. Regulates SNCA expression in primary cortical neurons. Binds to the COL2A1 promoter and activates COL2A1 expression, as part of a complex with SOX9. Plays a role in chondrocyte differentiation. The polypeptide is Zinc finger protein 219 (ZNF219) (Homo sapiens (Human)).